Consider the following 575-residue polypeptide: Transcription factor collier (575 aa).

The interval 79 to 82 (RKSN) is interaction with DNA. The C5-type zinc-finger motif lies at 167–186 (CRVLLTHEVMCSRCCDKKSC). Interaction with DNA regions lie at residues 213–220 (NCLKNAGN) and 252–255 (NNSK). The tract at residues 255–278 (KHGRRAKRLDTTEGTGNTSLSISG) is disordered. Positions 266–276 (TEGTGNTSLSI) are enriched in polar residues. Positions 299-382 (PCIKAISPSE…KGSPGRFVYV (84 aa)) constitute an IPT/TIG domain. Disordered regions lie at residues 456–492 (GQWT…GSYG) and 546–575 (AATA…AAAV). Over residues 479–492 (SSASTPHSSGGSYG) the composition is skewed to low complexity. Basic residues predominate over residues 546-557 (AATAHPHHHYPH). Residues 561–575 (PWHNPAVSAATAAAV) show a composition bias toward low complexity.

This sequence belongs to the COE family. Its expression at the blastoderm stage is restricted to a single stripe of cells corresponding to part of the intercalary and mandibular segment primordia, possibly parasegment O.

It localises to the nucleus. Its function is as follows. May act as a 'second-level regulator' of head patterning. Required for establishment of the PS(-1)/PS0 parasegmental border and formation of the intercalary segment. Required for expression of the segment polarity genes hedgehog, engrailed and wingless, and the segment-identity genes CAP and collar in the intercalary segment. Required at the onset of the gastrulation for the correct formation of the mandibular segment. In Drosophila melanogaster (Fruit fly), this protein is Transcription factor collier (kn).